The sequence spans 377 residues: Floricaula/leafy homolog (377 aa).

Residues 116–126 are compositionally biased toward basic and acidic residues; sequence RRRLDEEDPRR. A disordered region spans residues 116 to 190; that stretch reads RRRLDEEDPR…RKKGQRKVVD (75 aa). The span at 131–141 shows a compositional bias: polar residues; sequence SGDNNTNTLDA. DNA-binding regions lie at residues 206 to 210, 275 to 282, and 346 to 349; these read REHPF, NKPKMRHY, and YVPT.

It belongs to the FLO/LFY family. As to expression, in developing inflorescences, leaf primordia and very young leaves.

The protein localises to the nucleus. Its function is as follows. Probable transcription factor. The sequence is that of Floricaula/leafy homolog (FL) from Populus trichocarpa (Western balsam poplar).